Consider the following 581-residue polypeptide: Coiled-coil domain-containing protein 102A (581 aa).

Disordered regions lie at residues 1–61 (MNHT…GLGC), 156–219 (QRVR…IGTD), 496–517 (QAED…SLDE), and 534–581 (SRLR…LQIP). Over residues 39-59 (TPSPSGGTPSSSPPLLLSPGL) the composition is skewed to low complexity. A coiled-coil region spans residues 70–164 (REELRLRELE…AQRVRAEQSS (95 aa)). Residues 161 to 184 (EQSSPENASTAPESISSTASTHSN) are compositionally biased toward polar residues. Residues 185–202 (QPREAEIKQDNQDEEGVR) show a composition bias toward basic and acidic residues. Positions 270–541 (AALEEDTSKL…LQSRLRRQQN (272 aa)) form a coiled coil. Residues 559-581 (EDADGPPSDPDEDEEEELQLQIP) are compositionally biased toward acidic residues.

The chain is Coiled-coil domain-containing protein 102A (ccdc102a) from Danio rerio (Zebrafish).